The following is a 198-amino-acid chain: Photosystem I assembly protein Ycf4 (198 aa).

The tract at residues 1–20 (MTASTTINKGDSPNGDSSAS) is disordered. The next 2 helical transmembrane spans lie at 36–58 (YWWA…SSYL) and 78–100 (LVMG…VILW).

The protein belongs to the Ycf4 family.

The protein resides in the cellular thylakoid membrane. Seems to be required for the assembly of the photosystem I complex. The protein is Photosystem I assembly protein Ycf4 of Nostoc sp. (strain PCC 7120 / SAG 25.82 / UTEX 2576).